The primary structure comprises 493 residues: MSVQILHRRQSNNSDLPLPTASLPVQPAQAAAEAVAAVVARARQAQREFARADQATVDTAVAAAAWAIMEPARNRQLAERAVADTGLGNVDDKIRKNHRKTLGLLRDLHGRRTVGVIAQDAAAGITEIARPVGVVAAITPSTNPAATPANKIINALKCGNSVILAPSPKGQDTCALLLSFIHAEFARAGLPADLVQMLPAPVSKTATAELMRQADLVVATGSQANVRMAYTCGTPAFGVGAGNVASIIDASATLDDAAAKVARSKTFDNATSCSSENSLVVVDAVYTPMLDALAAVGGVLLTASEKARLQALMWRDAKLAGSFTGQSATRIAELAGLERVRALQPAMLLVEETGVGSDYPFSGEKLSPVLTLYRATDFAAAVERVASLYAYMGAGHSVSLHSSNPRHALQLGQELPVARVIVNQAHCFATGGNFDNGLPFSLSMGCGTWGGNNFSDNLGWRQYLNITRIAVPIAEHVPDEADLLGDYFARVGK.

Basic residues predominate over residues 1–10; that stretch reads MSVQILHRRQ. Residues 1–21 form a disordered region; sequence MSVQILHRRQSNNSDLPLPTA. The Nucleophile role is filled by Cys273.

The protein belongs to the aldehyde dehydrogenase family. Homodimer.

Its subcellular location is the cytoplasm. It carries out the reaction sulfoacetaldehyde + NADP(+) + CoA = sulfoacetyl-CoA + NADPH + H(+). Involved in the degradation of sulfoacetate, a widespread natural product. Catalyzes the conversion of sulfoacetyl-CoA and NADPH to sulfoacetaldehyde, CoA and NADP(+). Specific for NADP(+) and sulfoacetaldehyde. The polypeptide is Sulfoacetaldehyde dehydrogenase (acylating) (Cupriavidus necator (strain ATCC 17699 / DSM 428 / KCTC 22496 / NCIMB 10442 / H16 / Stanier 337) (Ralstonia eutropha)).